A 149-amino-acid polypeptide reads, in one-letter code: Calmodulin (149 aa).

Alanine 2 is subject to N-acetylalanine. 4 consecutive EF-hand domains span residues 8–43 (EQIA…LGQN), 44–79 (PTEA…KMKD), 81–116 (DSEE…LGEK), and 117–149 (LTDE…MMAK). Aspartate 21, aspartate 23, aspartate 25, cysteine 27, glutamate 32, aspartate 57, aspartate 59, asparagine 61, threonine 63, glutamate 68, aspartate 94, aspartate 96, asparagine 98, and glutamate 105 together coordinate Ca(2+). An N6,N6,N6-trimethyllysine modification is found at lysine 116. Residues aspartate 130, aspartate 132, aspartate 134, glutamine 136, and glutamate 141 each coordinate Ca(2+).

The protein belongs to the calmodulin family.

Calmodulin mediates the control of a large number of enzymes, ion channels and other proteins by Ca(2+). Among the enzymes to be stimulated by the calmodulin-Ca(2+) complex are a number of protein kinases and phosphatases. In Zea mays (Maize), this protein is Calmodulin (CALM1).